We begin with the raw amino-acid sequence, 305 residues long: uncharacterized protein (305 aa).

A compositionally biased stretch (basic residues) spans 1–10; sequence MLWAQRKKRK. A disordered region spans residues 1–30; sequence MLWAQRKKRKATTETTEDKPAESHRPNDSW. Positions 16 to 27 are enriched in basic and acidic residues; the sequence is TEDKPAESHRPN. At Ser-39 the chain carries Phosphoserine. Positions 92–101 are enriched in polar residues; it reads QKISGTSVSK. Residues 92-114 are disordered; it reads QKISGTSVSKEMQRESGKSPSME. Residue Ser-158 is modified to Phosphoserine. A compositionally biased stretch (low complexity) spans 197–208; the sequence is SHHGNQSHQNHN. The disordered stretch occupies residues 197-305; the sequence is SHHGNQSHQN…VNRRNQIYDS (109 aa). Composition is skewed to polar residues over residues 209-221 and 231-244; these read TYPC…SRSV and LSHQ…SHQN. Residues 247–293 are compositionally biased toward low complexity; it reads GHPSQQGHSSHSNQQGHLGLSSQQGHPSQSSHQSHQGQPGHPNHQSH. The segment covering 294-305 has biased composition (polar residues); sequence SLVNRRNQIYDS.

This is an uncharacterized protein from Rattus norvegicus (Rat).